We begin with the raw amino-acid sequence, 431 residues long: Glucose-1-phosphate adenylyltransferase (431 aa).

Lys-39 is a beta-D-fructose 1,6-bisphosphate binding site. The AMP site is built by Arg-40, His-46, and Arg-52. Tyr-114 contacts alpha-D-glucose 1-phosphate. Residue Arg-130 participates in AMP binding. Alpha-D-glucose 1-phosphate-binding positions include Gly-179, 194–195 (EK), and Ser-212. AMP is bound by residues Glu-370 and Arg-386. Beta-D-fructose 1,6-bisphosphate is bound by residues 419-423 (REMLR) and 429-431 (QER).

Belongs to the bacterial/plant glucose-1-phosphate adenylyltransferase family. Homotetramer.

The catalysed reaction is alpha-D-glucose 1-phosphate + ATP + H(+) = ADP-alpha-D-glucose + diphosphate. The protein operates within glycan biosynthesis; glycogen biosynthesis. Allosterically activated by fructose-1,6-bisphosphate (F16BP) and inhibited by AMP. Its function is as follows. Involved in the biosynthesis of ADP-glucose, a building block required for the elongation reactions to produce glycogen. Catalyzes the reaction between ATP and alpha-D-glucose 1-phosphate (G1P) to produce pyrophosphate and ADP-Glc. The polypeptide is Glucose-1-phosphate adenylyltransferase (Escherichia fergusonii (strain ATCC 35469 / DSM 13698 / CCUG 18766 / IAM 14443 / JCM 21226 / LMG 7866 / NBRC 102419 / NCTC 12128 / CDC 0568-73)).